A 317-amino-acid polypeptide reads, in one-letter code: Transaldolase 1 (317 aa).

Residue lysine 132 is the Schiff-base intermediate with substrate of the active site.

The protein belongs to the transaldolase family. Type 1 subfamily. In terms of assembly, homodimer.

The protein resides in the cytoplasm. The catalysed reaction is D-sedoheptulose 7-phosphate + D-glyceraldehyde 3-phosphate = D-erythrose 4-phosphate + beta-D-fructose 6-phosphate. It participates in carbohydrate degradation; pentose phosphate pathway; D-glyceraldehyde 3-phosphate and beta-D-fructose 6-phosphate from D-ribose 5-phosphate and D-xylulose 5-phosphate (non-oxidative stage): step 2/3. In terms of biological role, transaldolase is important for the balance of metabolites in the pentose-phosphate pathway. This is Transaldolase 1 from Salmonella paratyphi A (strain ATCC 9150 / SARB42).